A 373-amino-acid polypeptide reads, in one-letter code: Chaperone protein DnaJ (373 aa).

A J domain is found at 4–68 (NYYQILGVSK…QKRAAYDRLG (65 aa)). The CR-type zinc-finger motif lies at 136–214 (GIEKNINFSS…CHGMGRYHKQ (79 aa)). Zn(2+)-binding residues include cysteine 149, cysteine 152, cysteine 166, cysteine 169, cysteine 188, cysteine 191, cysteine 202, and cysteine 205. CXXCXGXG motif repeat units lie at residues 149 to 156 (CDTCHGSG), 166 to 173 (CDACSGVG), 188 to 195 (CHKCQGNG), and 202 to 209 (CKKCHGMG).

The protein belongs to the DnaJ family. In terms of assembly, homodimer. Zn(2+) serves as cofactor.

It is found in the cytoplasm. Functionally, participates actively in the response to hyperosmotic and heat shock by preventing the aggregation of stress-denatured proteins and by disaggregating proteins, also in an autonomous, DnaK-independent fashion. Unfolded proteins bind initially to DnaJ; upon interaction with the DnaJ-bound protein, DnaK hydrolyzes its bound ATP, resulting in the formation of a stable complex. GrpE releases ADP from DnaK; ATP binding to DnaK triggers the release of the substrate protein, thus completing the reaction cycle. Several rounds of ATP-dependent interactions between DnaJ, DnaK and GrpE are required for fully efficient folding. Also involved, together with DnaK and GrpE, in the DNA replication of plasmids through activation of initiation proteins. This is Chaperone protein DnaJ from Rickettsia rickettsii (strain Iowa).